Consider the following 361-residue polypeptide: BBSome complex member bbs-5 (361 aa).

Belongs to the BBS5 family. As to quaternary structure, part of BBSome complex, that contains at least bbs-1, bbs-2, bbs-4, bbs-5, osm-12, bbs-8/ttc-8 and bbs-9. Interacts with bbs-4 (via C-terminus); the interaction is direct.

Its subcellular location is the cell projection. It is found in the cilium membrane. It localises to the cytoplasm. The protein localises to the cytoskeleton. The protein resides in the cilium basal body. Its subcellular location is the microtubule organizing center. It is found in the centrosome. It localises to the centriolar satellite. Functionally, component of the BBSome complex. The BBSome complex is thought to function as a coat complex required for sorting of specific membrane proteins to the primary cilia. The BBSome complex is required for ciliogenesis but is dispensable for centriolar satellite function. Required for BBSome complex ciliary localization but not for the proper complex assembly. Required, redundantly with bbs-4, for cilia biogenesis and both the assembly and movement of intraflagellar transport proteins along the ciliary axoneme. Plays a role in the removal of degraded mechanosensory receptors within the cilia. The chain is BBSome complex member bbs-5 from Caenorhabditis elegans.